Reading from the N-terminus, the 285-residue chain is Phosphatidylglycerol--prolipoprotein diacylglyceryl transferase (285 aa).

Transmembrane regions (helical) follow at residues 26–46, 71–91, 107–127, and 133–153; these read IALHWYGLGYVVGILFSWWYV, FVVWAALGIVVGGRLGQVLIW, WDGGMSFHGGLIGTTIAIIWF, and INIWAMFDTIAAGAPFGIGVV. Position 154 (Arg-154) interacts with a 1,2-diacyl-sn-glycero-3-phospho-(1'-sn-glycerol). A run of 3 helical transmembrane segments spans residues 194–214, 218–238, and 256–276; these read LMEGFLLFIVLAFIIFAFKAF, GTVAGTFIISYGIARTISEIF, and GFTYGMALSLPMILFGFYAIF.

Belongs to the Lgt family.

It is found in the cell inner membrane. It catalyses the reaction L-cysteinyl-[prolipoprotein] + a 1,2-diacyl-sn-glycero-3-phospho-(1'-sn-glycerol) = an S-1,2-diacyl-sn-glyceryl-L-cysteinyl-[prolipoprotein] + sn-glycerol 1-phosphate + H(+). The protein operates within protein modification; lipoprotein biosynthesis (diacylglyceryl transfer). Catalyzes the transfer of the diacylglyceryl group from phosphatidylglycerol to the sulfhydryl group of the N-terminal cysteine of a prolipoprotein, the first step in the formation of mature lipoproteins. The protein is Phosphatidylglycerol--prolipoprotein diacylglyceryl transferase of Bartonella bacilliformis (strain ATCC 35685 / KC583 / Herrer 020/F12,63).